We begin with the raw amino-acid sequence, 175 residues long: Putative transmembrane protein ORF175 (175 aa).

A run of 4 helical transmembrane segments spans residues 14–34 (LGIV…GSFM), 58–78 (VLSN…AIAF), 101–121 (IVVA…FALF), and 142–162 (ITPF…VLSI).

Its subcellular location is the host membrane. The polypeptide is Putative transmembrane protein ORF175 (Acidianus two-tailed virus (ATV)).